The sequence spans 94 residues: MLQSNEYFSGKVKSIGFTSSSTGRASVGVMAEGEYAFSTAAPEEMTVVSGALNVLLPGETEWKVYAAGEVFNVPGQSEFHLQVAEPTSYLCRYL.

The protein belongs to the nucleoside phosphorylase PpnP family.

The enzyme catalyses a purine D-ribonucleoside + phosphate = a purine nucleobase + alpha-D-ribose 1-phosphate. It catalyses the reaction adenosine + phosphate = alpha-D-ribose 1-phosphate + adenine. The catalysed reaction is cytidine + phosphate = cytosine + alpha-D-ribose 1-phosphate. It carries out the reaction guanosine + phosphate = alpha-D-ribose 1-phosphate + guanine. The enzyme catalyses inosine + phosphate = alpha-D-ribose 1-phosphate + hypoxanthine. It catalyses the reaction thymidine + phosphate = 2-deoxy-alpha-D-ribose 1-phosphate + thymine. The catalysed reaction is uridine + phosphate = alpha-D-ribose 1-phosphate + uracil. It carries out the reaction xanthosine + phosphate = alpha-D-ribose 1-phosphate + xanthine. Its function is as follows. Catalyzes the phosphorolysis of diverse nucleosides, yielding D-ribose 1-phosphate and the respective free bases. Can use uridine, adenosine, guanosine, cytidine, thymidine, inosine and xanthosine as substrates. Also catalyzes the reverse reactions. This Citrobacter koseri (strain ATCC BAA-895 / CDC 4225-83 / SGSC4696) protein is Pyrimidine/purine nucleoside phosphorylase.